The sequence spans 417 residues: RH-like protein (417 aa).

11 consecutive transmembrane segments (helical) span residues 12 to 32 (CLPL…FFFT), 44 to 64 (LVAS…GLGF), 77 to 97 (VAFN…LDGF), 125 to 145 (ISMN…MELV), 172 to 192 (IHVF…KPLP), 203 to 223 (TSPS…WPTF), 238 to 258 (VFST…VSSL), 265 to 285 (INMT…GASC), 287 to 307 (VIHS…ISFG), 331 to 351 (TFGL…ALRV), and 358 to 378 (MIGF…AMSI).

This sequence belongs to the ammonium transporter (TC 2.A.49) family. Rh subfamily.

Its subcellular location is the membrane. In terms of biological role, may be part of an oligomeric complex which is likely to have a transport or channel function in the erythrocyte membrane. This Macaca fascicularis (Crab-eating macaque) protein is RH-like protein.